A 613-amino-acid polypeptide reads, in one-letter code: Threonine--tRNA ligase (613 aa).

The editing domain stretch occupies residues 1 to 147; the sequence is MRLLLIHARS…TITPQESAPQ (147 aa). 2 catalytic regions span residues 199 to 495 and 200 to 495; these read PRYI…PALP and RYID…PALP. Zn(2+) contacts are provided by Cys-292, His-343, and His-464.

This sequence belongs to the class-II aminoacyl-tRNA synthetase family. Homodimer. Requires Zn(2+) as cofactor.

It is found in the cytoplasm. The enzyme catalyses tRNA(Thr) + L-threonine + ATP = L-threonyl-tRNA(Thr) + AMP + diphosphate + H(+). Catalyzes the attachment of threonine to tRNA(Thr) in a two-step reaction: L-threonine is first activated by ATP to form Thr-AMP and then transferred to the acceptor end of tRNA(Thr). Also edits incorrectly charged L-seryl-tRNA(Thr). This chain is Threonine--tRNA ligase, found in Caldivirga maquilingensis (strain ATCC 700844 / DSM 13496 / JCM 10307 / IC-167).